The sequence spans 530 residues: Synembryn-like chaperone C3E7.04c (530 aa).

Residues 492–512 traverse the membrane as a helical segment; that stretch reads SFIYHCYHSFVGPIHILLLMF.

This sequence belongs to the synembryn family.

The protein resides in the membrane. Functionally, chaperone that specifically binds and folds some, but not all, nascent G alpha proteins prior to G protein heterotrimer formation, promoting their stability and activity. Also acts as a guanine nucleotide exchange factor (GEF) for G alpha proteins by stimulating exchange of bound GDP for free GTP. The protein is Synembryn-like chaperone C3E7.04c of Schizosaccharomyces pombe (strain 972 / ATCC 24843) (Fission yeast).